The primary structure comprises 56 residues: UPF0391 membrane protein Jann_3570 (56 aa).

2 consecutive transmembrane segments (helical) span residues 4 to 24 and 29 to 48; these read WAVT…GGIA and GIAQ…SLVA.

Belongs to the UPF0391 family.

It localises to the cell membrane. The chain is UPF0391 membrane protein Jann_3570 from Jannaschia sp. (strain CCS1).